Consider the following 352-residue polypeptide: Probable RNA methyltransferase Mpe_A3613 (352 aa).

E88 functions as the Proton acceptor in the catalytic mechanism. The Radical SAM core domain maps to 91-317; it reads LLPRDGLCVS…TKLRRSAGQD (227 aa). C98 and C322 are disulfide-bonded. [4Fe-4S] cluster contacts are provided by C105, C109, and C112. S-adenosyl-L-methionine-binding positions include 150 to 151, S180, 203 to 205, and N279; these read GE and SLH. C322 acts as the S-methylcysteine intermediate in catalysis.

The protein belongs to the radical SAM superfamily. RlmN family. [4Fe-4S] cluster is required as a cofactor.

It is found in the cytoplasm. The polypeptide is Probable RNA methyltransferase Mpe_A3613 (Methylibium petroleiphilum (strain ATCC BAA-1232 / LMG 22953 / PM1)).